A 210-amino-acid chain; its full sequence is Nta operon transcriptional regulator (210 aa).

An HTH gntR-type domain is found at methionine 1–leucine 55. Residues glutamate 15–asparagine 34 constitute a DNA-binding region (H-T-H motif).

In terms of biological role, probable regulator for the expression of the NTA monooxygenase subunits. The sequence is that of Nta operon transcriptional regulator (ntaR) from Aminobacter aminovorans (Chelatobacter heintzii).